Consider the following 30-residue polypeptide: Large ribosomal subunit protein bL25 (30 aa).

This sequence belongs to the bacterial ribosomal protein bL25 family. In terms of assembly, part of the 50S ribosomal subunit; part of the 5S rRNA/L5/L18/L25 subcomplex. Contacts the 5S rRNA. Binds to the 5S rRNA independently of L5 and L18.

Functionally, this is one of the proteins that binds to the 5S RNA in the ribosome where it forms part of the central protuberance. The protein is Large ribosomal subunit protein bL25 (rplY) of Anabaena variabilis.